We begin with the raw amino-acid sequence, 306 residues long: Formamidopyrimidine-DNA glycosylase (306 aa).

P2 serves as the catalytic Schiff-base intermediate with DNA. Catalysis depends on E3, which acts as the Proton donor. K58 (proton donor; for beta-elimination activity) is an active-site residue. DNA is bound by residues H114, R136, and K179. Residues 270–306 (SVYDREGEACRTSGCRGTVERIVQAGRSTFYCPHCQK) form an FPG-type zinc finger. R296 acts as the Proton donor; for delta-elimination activity in catalysis.

Belongs to the FPG family. As to quaternary structure, monomer. Zn(2+) serves as cofactor.

The enzyme catalyses Hydrolysis of DNA containing ring-opened 7-methylguanine residues, releasing 2,6-diamino-4-hydroxy-5-(N-methyl)formamidopyrimidine.. It catalyses the reaction 2'-deoxyribonucleotide-(2'-deoxyribose 5'-phosphate)-2'-deoxyribonucleotide-DNA = a 3'-end 2'-deoxyribonucleotide-(2,3-dehydro-2,3-deoxyribose 5'-phosphate)-DNA + a 5'-end 5'-phospho-2'-deoxyribonucleoside-DNA + H(+). Functionally, involved in base excision repair of DNA damaged by oxidation or by mutagenic agents. Acts as a DNA glycosylase that recognizes and removes damaged bases. Has a preference for oxidized purines, such as 7,8-dihydro-8-oxoguanine (8-oxoG). Has AP (apurinic/apyrimidinic) lyase activity and introduces nicks in the DNA strand. Cleaves the DNA backbone by beta-delta elimination to generate a single-strand break at the site of the removed base with both 3'- and 5'-phosphates. In Sinorhizobium medicae (strain WSM419) (Ensifer medicae), this protein is Formamidopyrimidine-DNA glycosylase.